The sequence spans 187 residues: Ribosome-recycling factor (187 aa).

It belongs to the RRF family.

It is found in the cytoplasm. Its function is as follows. Responsible for the release of ribosomes from messenger RNA at the termination of protein biosynthesis. May increase the efficiency of translation by recycling ribosomes from one round of translation to another. The sequence is that of Ribosome-recycling factor from Ruegeria pomeroyi (strain ATCC 700808 / DSM 15171 / DSS-3) (Silicibacter pomeroyi).